Consider the following 686-residue polypeptide: DNA ligase (686 aa).

NAD(+) contacts are provided by residues 34–38 (DAEYD), 83–84 (SI), and Glu120. Residue Lys122 is the N6-AMP-lysine intermediate of the active site. Residues Arg143, Glu180, Lys298, and Lys322 each coordinate NAD(+). Cys420, Cys423, Cys438, and Cys444 together coordinate Zn(2+). The BRCT domain occupies 603–686 (QSGGILSGKT…ALLGSNKKNG (84 aa)).

It belongs to the NAD-dependent DNA ligase family. LigA subfamily. Mg(2+) serves as cofactor. The cofactor is Mn(2+).

It carries out the reaction NAD(+) + (deoxyribonucleotide)n-3'-hydroxyl + 5'-phospho-(deoxyribonucleotide)m = (deoxyribonucleotide)n+m + AMP + beta-nicotinamide D-nucleotide.. DNA ligase that catalyzes the formation of phosphodiester linkages between 5'-phosphoryl and 3'-hydroxyl groups in double-stranded DNA using NAD as a coenzyme and as the energy source for the reaction. It is essential for DNA replication and repair of damaged DNA. The polypeptide is DNA ligase (Thiobacillus denitrificans (strain ATCC 25259 / T1)).